We begin with the raw amino-acid sequence, 87 residues long: Toxin CngtIII (87 aa).

The N-terminal stretch at 1-19 (MNSLLMITACLVLFGTVWA) is a signal peptide. The LCN-type CS-alpha/beta domain maps to 20–85 (KEGYLVNKST…TYPLPNKTCS (66 aa)). Intrachain disulfides connect Cys31/Cys84, Cys35/Cys60, Cys44/Cys65, and Cys48/Cys67.

This sequence belongs to the long (4 C-C) scorpion toxin superfamily. Sodium channel inhibitor family. Beta subfamily. In terms of tissue distribution, expressed by the venom gland.

It localises to the secreted. Functionally, beta toxins bind voltage-independently at site-4 of sodium channels (Nav) and shift the voltage of activation toward more negative potentials thereby affecting sodium channel activation and promoting spontaneous and repetitive firing. This is Toxin CngtIII from Centruroides noxius (Mexican scorpion).